Consider the following 561-residue polypeptide: Potassium-transporting ATPase potassium-binding subunit (561 aa).

10 consecutive transmembrane segments (helical) span residues 4–24 (IVMQ…PLGI), 65–85 (AVSV…VLML), 133–153 (IGLT…LFAV), 177–197 (LYIL…QGVV), 253–273 (FTNL…VVMF), 285–305 (AIMT…TISE), 380–400 (GLYG…LLVG), 417–437 (MVCL…AVAV), 484–504 (MVGA…ALYL), and 528–548 (FIGL…LPAL).

The protein belongs to the KdpA family. In terms of assembly, the system is composed of three essential subunits: KdpA, KdpB and KdpC.

Its subcellular location is the cell membrane. In terms of biological role, part of the high-affinity ATP-driven potassium transport (or Kdp) system, which catalyzes the hydrolysis of ATP coupled with the electrogenic transport of potassium into the cytoplasm. This subunit binds the extracellular potassium ions and delivers the ions to the membrane domain of KdpB through an intramembrane tunnel. In Listeria monocytogenes serotype 4a (strain HCC23), this protein is Potassium-transporting ATPase potassium-binding subunit.